The sequence spans 348 residues: Fructose-1,6-bisphosphatase class 1 (348 aa).

Residues glutamate 107, aspartate 129, isoleucine 131, and aspartate 132 each contribute to the Mg(2+) site. Substrate-binding positions include 132-135, asparagine 224, tyrosine 252, and lysine 282; that span reads DGSS. Glutamate 288 contacts Mg(2+).

The protein belongs to the FBPase class 1 family. Homotetramer. It depends on Mg(2+) as a cofactor.

It localises to the cytoplasm. It carries out the reaction beta-D-fructose 1,6-bisphosphate + H2O = beta-D-fructose 6-phosphate + phosphate. It functions in the pathway carbohydrate biosynthesis; Calvin cycle. The sequence is that of Fructose-1,6-bisphosphatase class 1 from Microcystis aeruginosa (strain NIES-843 / IAM M-2473).